We begin with the raw amino-acid sequence, 540 residues long: UDP-N-acetylmuramyl-tripeptide synthetase (540 aa).

Ser-33 serves as a coordination point for UDP-N-acetyl-alpha-D-muramoyl-L-alanyl-D-glutamate. Residue 114 to 120 (GTEGKSS) coordinates ATP. UDP-N-acetyl-alpha-D-muramoyl-L-alanyl-D-glutamate is bound by residues 158–159 (TT), Ser-185, and Arg-195. N6-carboxylysine is present on Lys-227.

Belongs to the MurCDEF family. MurE subfamily. In terms of processing, carboxylation is probably crucial for Mg(2+) binding and, consequently, for the gamma-phosphate positioning of ATP.

Its subcellular location is the cytoplasm. The protein operates within cell wall biogenesis; peptidoglycan biosynthesis. Catalyzes the addition of an amino acid to the nucleotide precursor UDP-N-acetylmuramoyl-L-alanyl-D-glutamate (UMAG) in the biosynthesis of bacterial cell-wall peptidoglycan. The polypeptide is UDP-N-acetylmuramyl-tripeptide synthetase (Treponema pallidum (strain Nichols)).